Reading from the N-terminus, the 425-residue chain is Serine--tRNA ligase (425 aa).

230 to 232 (TAE) is an L-serine binding site. Residue 261–263 (RSE) participates in ATP binding. E284 lines the L-serine pocket. Position 348–351 (348–351 (EISS)) interacts with ATP. S384 provides a ligand contact to L-serine.

This sequence belongs to the class-II aminoacyl-tRNA synthetase family. Type-1 seryl-tRNA synthetase subfamily. In terms of assembly, homodimer. The tRNA molecule binds across the dimer.

The protein resides in the cytoplasm. It carries out the reaction tRNA(Ser) + L-serine + ATP = L-seryl-tRNA(Ser) + AMP + diphosphate + H(+). The enzyme catalyses tRNA(Sec) + L-serine + ATP = L-seryl-tRNA(Sec) + AMP + diphosphate + H(+). Its pathway is aminoacyl-tRNA biosynthesis; selenocysteinyl-tRNA(Sec) biosynthesis; L-seryl-tRNA(Sec) from L-serine and tRNA(Sec): step 1/1. Its function is as follows. Catalyzes the attachment of serine to tRNA(Ser). Is also able to aminoacylate tRNA(Sec) with serine, to form the misacylated tRNA L-seryl-tRNA(Sec), which will be further converted into selenocysteinyl-tRNA(Sec). This is Serine--tRNA ligase from Streptococcus gordonii (strain Challis / ATCC 35105 / BCRC 15272 / CH1 / DL1 / V288).